Here is a 222-residue protein sequence, read N- to C-terminus: Protein-L-isoaspartate O-methyltransferase (222 aa).

S69 is an active-site residue.

It belongs to the methyltransferase superfamily. L-isoaspartyl/D-aspartyl protein methyltransferase family.

It localises to the cytoplasm. It carries out the reaction [protein]-L-isoaspartate + S-adenosyl-L-methionine = [protein]-L-isoaspartate alpha-methyl ester + S-adenosyl-L-homocysteine. Its function is as follows. Catalyzes the methyl esterification of L-isoaspartyl residues in peptides and proteins that result from spontaneous decomposition of normal L-aspartyl and L-asparaginyl residues. It plays a role in the repair and/or degradation of damaged proteins. The polypeptide is Protein-L-isoaspartate O-methyltransferase (Nitrosomonas europaea (strain ATCC 19718 / CIP 103999 / KCTC 2705 / NBRC 14298)).